The following is a 277-amino-acid chain: Orotidine 5'-phosphate decarboxylase (277 aa).

Lys-93 (proton donor) is an active-site residue.

This sequence belongs to the OMP decarboxylase family. Type 2 subfamily.

It catalyses the reaction orotidine 5'-phosphate + H(+) = UMP + CO2. It participates in pyrimidine metabolism; UMP biosynthesis via de novo pathway; UMP from orotate: step 2/2. This is Orotidine 5'-phosphate decarboxylase from Haloarcula marismortui (strain ATCC 43049 / DSM 3752 / JCM 8966 / VKM B-1809) (Halobacterium marismortui).